The chain runs to 61 residues: Large ribosomal subunit protein uL30 (61 aa).

It belongs to the universal ribosomal protein uL30 family. As to quaternary structure, part of the 50S ribosomal subunit.

In Lactobacillus delbrueckii subsp. bulgaricus (strain ATCC 11842 / DSM 20081 / BCRC 10696 / JCM 1002 / NBRC 13953 / NCIMB 11778 / NCTC 12712 / WDCM 00102 / Lb 14), this protein is Large ribosomal subunit protein uL30.